The following is a 355-amino-acid chain: MSALGSRETHVLTTIIESYITSAAPVGSRTVSRRSGLALSPASMRNTMSDLTDMGFLEQPHTSAGRIPTPKAFRLYVDALLRQSARRDEAPLHMVEALHGHEPEVGALLRRASNLVSEHARQVSMVLAPGPAEARLRSLDFVPAGEGLVLAVLVLEGGMVRTRLVRDDTHFGSDELVRFGNYINAHYRGHTLSGIRNSIHHELSGGGAQLEAMCAQALALGSLALDSIDDDRELYVNGTRNILDQAEFAELGRMRELMDALEERSRLLELLDRTILEDDVHVTFYPDDVSGGAQRRAPDGLRGCSMVSAPYGGASPLGVIGVIGPVRMDYRKVLPLVGAVSRVLTQLLRERFATG.

This sequence belongs to the HrcA family.

In terms of biological role, negative regulator of class I heat shock genes (grpE-dnaK-dnaJ and groELS operons). Prevents heat-shock induction of these operons. This Nitratidesulfovibrio vulgaris (strain ATCC 29579 / DSM 644 / CCUG 34227 / NCIMB 8303 / VKM B-1760 / Hildenborough) (Desulfovibrio vulgaris) protein is Heat-inducible transcription repressor HrcA.